Reading from the N-terminus, the 342-residue chain is uncharacterized protein (342 aa).

A run of 10 helical transmembrane segments spans residues 8–28 (FESSWFAAVMGTGVLAVTSLF), 39–59 (ISFLLFYFNILLFFVFLMLWI), 79–99 (SSFSPTVAVAMLVLGIDFILI), 108–128 (IFWVFGAIGMFLFSLIVPFYM), 142–162 (GWYIPPVGLIVIPIAGSLIMP), 175–195 (INYFGWGAGFFLYLALLAVVI), 207–227 (AMAPTVWINLGPIGAGIVALI), 242–262 (FYIFSFIFWGFGLWWSLMAII), 276–296 (AMSWWAFIFPLGVYIASTHLV), and 304–324 (IVDYIGFGLYWLLFFFWIVTL).

This sequence belongs to the tellurite-resistance/dicarboxylate transporter (TDT) family.

The protein resides in the cell membrane. This is an uncharacterized protein from Methanocaldococcus jannaschii (strain ATCC 43067 / DSM 2661 / JAL-1 / JCM 10045 / NBRC 100440) (Methanococcus jannaschii).